A 223-amino-acid polypeptide reads, in one-letter code: UPF0758 protein HD_0732 (223 aa).

The MPN domain occupies 98–220; sequence TINTPHLAIM…YFSFEEERFH (123 aa). Residues H169, H171, and D182 each coordinate Zn(2+). Positions 169–182 match the JAMM motif motif; sequence HNHPSGNCTASQAD.

The protein belongs to the UPF0758 family.

The protein is UPF0758 protein HD_0732 of Haemophilus ducreyi (strain 35000HP / ATCC 700724).